A 444-amino-acid chain; its full sequence is Elongation factor 1-alpha (444 aa).

Positions 15 to 236 (KPHLNLAVIG…ALDTFQPPPR (222 aa)) constitute a tr-type G domain. The interval 24–31 (GHVDNGKS) is G1. 24 to 31 (GHVDNGKS) lines the GTP pocket. Position 31 (Ser31) interacts with Mg(2+). The interval 80 to 84 (GVTIE) is G2. Positions 101–104 (DLPG) are G3. GTP-binding positions include 101–105 (DLPGH) and 163–166 (NKMD). Positions 163–166 (NKMD) are G4. A G5 region spans residues 202–204 (SAI).

This sequence belongs to the TRAFAC class translation factor GTPase superfamily. Classic translation factor GTPase family. EF-Tu/EF-1A subfamily.

It localises to the cytoplasm. It catalyses the reaction GTP + H2O = GDP + phosphate + H(+). In terms of biological role, GTP hydrolase that promotes the GTP-dependent binding of aminoacyl-tRNA to the A-site of ribosomes during protein biosynthesis. This chain is Elongation factor 1-alpha, found in Pyrobaculum islandicum (strain DSM 4184 / JCM 9189 / GEO3).